A 462-amino-acid polypeptide reads, in one-letter code: Signal recognition particle protein (462 aa).

GTP is bound by residues 107-114 (GLQGAGKT), 190-194 (DTAGR), and 248-251 (TKVD).

This sequence belongs to the GTP-binding SRP family. SRP54 subfamily. As to quaternary structure, part of the signal recognition particle protein translocation system, which is composed of SRP and FtsY. SRP is a ribonucleoprotein composed of Ffh and a 4.5S RNA molecule.

The protein localises to the cytoplasm. It catalyses the reaction GTP + H2O = GDP + phosphate + H(+). In terms of biological role, involved in targeting and insertion of nascent membrane proteins into the cytoplasmic membrane. Binds to the hydrophobic signal sequence of the ribosome-nascent chain (RNC) as it emerges from the ribosomes. The SRP-RNC complex is then targeted to the cytoplasmic membrane where it interacts with the SRP receptor FtsY. Interaction with FtsY leads to the transfer of the RNC complex to the Sec translocase for insertion into the membrane, the hydrolysis of GTP by both Ffh and FtsY, and the dissociation of the SRP-FtsY complex into the individual components. The sequence is that of Signal recognition particle protein from Haemophilus influenzae (strain ATCC 51907 / DSM 11121 / KW20 / Rd).